Here is a 336-residue protein sequence, read N- to C-terminus: Meiotically up-regulated gene 33 protein (336 aa).

Positions 232-336 (ISEDDGLKRG…KPSRFSWGRS (105 aa)) are disordered. Over residues 250-262 (TFSNDSRSLSSYA) the composition is skewed to polar residues.

The protein resides in the cytoplasm. Has a role in meiosis. The protein is Meiotically up-regulated gene 33 protein (mug33) of Schizosaccharomyces pombe (strain 972 / ATCC 24843) (Fission yeast).